Here is a 431-residue protein sequence, read N- to C-terminus: MLQHTKSAELFEKAKQFIPGGVNSPVRAFKSVGGTPIYMAKGRGAYLTDVDGNSYLDYVGSWGPFILGSMHPRITAALEYTLKNIGTSFGTPIEMEIEIAELLCKIVPSLEMVRMVNSGTEATMSAVRLARGYTGRDKIIKFEGCYHGHGDSFLIKAGSGALTLGAPDSPGVTKGTALDTLNATYNDIESVKLLVEENKNNIAAIIIEPVAGNTGVIPAKPGFLADLRNLCDQNGIVLIFDEVMCGFRVALGGAQSLYGVTPDLTTMGKIIGGGLPVGAFGGKRKIMERVAPLGDVYQAGTLSGNPLALTAGLETLKILMDENPYPELERKAAILEAGFRDNMQKLGLNFVQNRVGSMACLFFTETPVESYASAITADIRKYGKYFHSMLEQGIYLAPSQFEAMFTSSMHTDEDLDKTIKANFNALQIACS.

The residue at position 269 (K269) is an N6-(pyridoxal phosphate)lysine.

Belongs to the class-III pyridoxal-phosphate-dependent aminotransferase family. HemL subfamily. As to quaternary structure, homodimer. Pyridoxal 5'-phosphate is required as a cofactor.

Its subcellular location is the cytoplasm. It catalyses the reaction (S)-4-amino-5-oxopentanoate = 5-aminolevulinate. The protein operates within porphyrin-containing compound metabolism; protoporphyrin-IX biosynthesis; 5-aminolevulinate from L-glutamyl-tRNA(Glu): step 2/2. It functions in the pathway porphyrin-containing compound metabolism; chlorophyll biosynthesis. The polypeptide is Glutamate-1-semialdehyde 2,1-aminomutase (Chlorobium phaeobacteroides (strain DSM 266 / SMG 266 / 2430)).